The following is a 159-amino-acid chain: Ribosome maturation factor RimP (159 aa).

The protein belongs to the RimP family.

It localises to the cytoplasm. Functionally, required for maturation of 30S ribosomal subunits. This chain is Ribosome maturation factor RimP, found in Streptococcus agalactiae serotype III (strain NEM316).